Consider the following 263-residue polypeptide: Triosephosphate isomerase (263 aa).

Substrate is bound at residue 10 to 12 (NWK). The Electrophile role is filled by His104. Glu176 (proton acceptor) is an active-site residue. Residues Gly182, Ser221, and 242–243 (GG) contribute to the substrate site.

The protein belongs to the triosephosphate isomerase family. As to quaternary structure, homodimer.

Its subcellular location is the cytoplasm. It carries out the reaction D-glyceraldehyde 3-phosphate = dihydroxyacetone phosphate. The protein operates within carbohydrate biosynthesis; gluconeogenesis. It participates in carbohydrate degradation; glycolysis; D-glyceraldehyde 3-phosphate from glycerone phosphate: step 1/1. Involved in the gluconeogenesis. Catalyzes stereospecifically the conversion of dihydroxyacetone phosphate (DHAP) to D-glyceraldehyde-3-phosphate (G3P). The polypeptide is Triosephosphate isomerase (Haemophilus influenzae (strain 86-028NP)).